We begin with the raw amino-acid sequence, 76 residues long: Omega-agatoxin-Aa3a (76 aa).

Intrachain disulfides connect Cys-2/Cys-19, Cys-9/Cys-25, Cys-16/Cys-52, Cys-18/Cys-40, Cys-27/Cys-38, and Cys-59/Cys-67.

This sequence belongs to the neurotoxin 04 (omega-agtx) family. 03 (type II/III omega-agtx) subfamily. In terms of tissue distribution, expressed by the venom gland.

The protein resides in the secreted. Omega-agatoxin are antagonist of voltage-gated calcium channels. They block insect neuromuscular transmission presynaptically. Potent blocker of N- (Cav2.2/CACNA1B) and L-type (Cav1/CACNA1) calcium channels. In Agelenopsis aperta (North American funnel-web spider), this protein is Omega-agatoxin-Aa3a.